A 191-amino-acid polypeptide reads, in one-letter code: MQTIKCVVVGDGAVGKTCLLISYTTNKFPSEYVPTVFDNYAVTVMIGGEPYTLGLFDTAGQEDYDRLRPLSYPQTDVFLVCFSVVSPSSFENVKEKWVPEITHHCQKTPFLLVGTQIDLRDEQSTLEKLAKNKQKPITLEQGEKLAKELKAVKYVECSALTQKGLKNVFDEAILAALEPPEPTKKRKCKFL.

10 to 17 (GDGAVGKT) serves as a coordination point for GTP. The Effector region signature appears at 32 to 40 (YVPTVFDNY). GTP-binding positions include 57–61 (DTAGQ) and 115–118 (TQID). Cysteine 188 carries the cysteine methyl ester modification. The S-geranylgeranyl cysteine moiety is linked to residue cysteine 188. Residues 189–191 (KFL) constitute a propeptide, removed in mature form.

The protein belongs to the small GTPase superfamily. Rho family. CDC42 subfamily.

It is found in the cell junction. It localises to the adherens junction. The protein resides in the cell membrane. Functionally, regulates mbt kinase activity and is also required to recruit mbt to adherens junctions. Together with mbt, regulates photoreceptor cell morphogenesis. The polypeptide is Cdc42 homolog (Aedes aegypti (Yellowfever mosquito)).